Reading from the N-terminus, the 471-residue chain is 3-isopropylmalate dehydratase large subunit (471 aa).

C347, C407, and C410 together coordinate [4Fe-4S] cluster. Residues 417 to 443 (TLQPGERSASTSNRNFEGRQGKGGRTH) are disordered.

The protein belongs to the aconitase/IPM isomerase family. LeuC type 1 subfamily. In terms of assembly, heterodimer of LeuC and LeuD. [4Fe-4S] cluster serves as cofactor.

The enzyme catalyses (2R,3S)-3-isopropylmalate = (2S)-2-isopropylmalate. Its pathway is amino-acid biosynthesis; L-leucine biosynthesis; L-leucine from 3-methyl-2-oxobutanoate: step 2/4. Its function is as follows. Catalyzes the isomerization between 2-isopropylmalate and 3-isopropylmalate, via the formation of 2-isopropylmaleate. This chain is 3-isopropylmalate dehydratase large subunit, found in Nocardioides sp. (strain ATCC BAA-499 / JS614).